Reading from the N-terminus, the 51-residue chain is Glutamate dehydrogenase (51 aa).

Substrate is bound at residue Lys-31.

It belongs to the Glu/Leu/Phe/Val dehydrogenases family. As to quaternary structure, homohexamer.

It localises to the mitochondrion matrix. The enzyme catalyses L-glutamate + NAD(+) + H2O = 2-oxoglutarate + NH4(+) + NADH + H(+). The catalysed reaction is L-glutamate + NADP(+) + H2O = 2-oxoglutarate + NH4(+) + NADPH + H(+). In terms of biological role, mitochondrial glutamate dehydrogenase that converts L-glutamate into alpha-ketoglutarate. Plays a key role in glutamine anaplerosis by producing alpha-ketoglutarate, an important intermediate in the tricarboxylic acid cycle. The sequence is that of Glutamate dehydrogenase from Electrophorus electricus (Electric eel).